Consider the following 318-residue polypeptide: 4-hydroxy-3-methylbut-2-enyl diphosphate reductase (318 aa).

[4Fe-4S] cluster is bound at residue C12. (2E)-4-hydroxy-3-methylbut-2-enyl diphosphate is bound by residues H41 and H74. Residues H41 and H74 each contribute to the dimethylallyl diphosphate site. Isopentenyl diphosphate is bound by residues H41 and H74. C96 is a binding site for [4Fe-4S] cluster. H124 contacts (2E)-4-hydroxy-3-methylbut-2-enyl diphosphate. H124 contacts dimethylallyl diphosphate. An isopentenyl diphosphate-binding site is contributed by H124. The active-site Proton donor is E126. T167 serves as a coordination point for (2E)-4-hydroxy-3-methylbut-2-enyl diphosphate. C197 contacts [4Fe-4S] cluster. (2E)-4-hydroxy-3-methylbut-2-enyl diphosphate is bound by residues S225, S226, N227, and S269. The dimethylallyl diphosphate site is built by S225, S226, N227, and S269. S225, S226, N227, and S269 together coordinate isopentenyl diphosphate.

The protein belongs to the IspH family. The cofactor is [4Fe-4S] cluster.

The enzyme catalyses isopentenyl diphosphate + 2 oxidized [2Fe-2S]-[ferredoxin] + H2O = (2E)-4-hydroxy-3-methylbut-2-enyl diphosphate + 2 reduced [2Fe-2S]-[ferredoxin] + 2 H(+). It carries out the reaction dimethylallyl diphosphate + 2 oxidized [2Fe-2S]-[ferredoxin] + H2O = (2E)-4-hydroxy-3-methylbut-2-enyl diphosphate + 2 reduced [2Fe-2S]-[ferredoxin] + 2 H(+). The protein operates within isoprenoid biosynthesis; dimethylallyl diphosphate biosynthesis; dimethylallyl diphosphate from (2E)-4-hydroxy-3-methylbutenyl diphosphate: step 1/1. It participates in isoprenoid biosynthesis; isopentenyl diphosphate biosynthesis via DXP pathway; isopentenyl diphosphate from 1-deoxy-D-xylulose 5-phosphate: step 6/6. Its function is as follows. Catalyzes the conversion of 1-hydroxy-2-methyl-2-(E)-butenyl 4-diphosphate (HMBPP) into a mixture of isopentenyl diphosphate (IPP) and dimethylallyl diphosphate (DMAPP). Acts in the terminal step of the DOXP/MEP pathway for isoprenoid precursor biosynthesis. The polypeptide is 4-hydroxy-3-methylbut-2-enyl diphosphate reductase (Francisella philomiragia subsp. philomiragia (strain ATCC 25017 / CCUG 19701 / FSC 153 / O#319-036)).